The primary structure comprises 129 residues: Fluoride-specific ion channel FluC (129 aa).

4 consecutive transmembrane segments (helical) span residues Leu-4–Ile-24, Phe-32–Thr-52, Phe-69–Leu-89, and Val-105–Ile-125. Residues Gly-76 and Thr-79 each contribute to the Na(+) site.

This sequence belongs to the fluoride channel Fluc/FEX (TC 1.A.43) family.

It is found in the cell inner membrane. It catalyses the reaction fluoride(in) = fluoride(out). Na(+) is not transported, but it plays an essential structural role and its presence is essential for fluoride channel function. Its function is as follows. Fluoride-specific ion channel. Important for reducing fluoride concentration in the cell, thus reducing its toxicity. The polypeptide is Fluoride-specific ion channel FluC (Rhodospirillum rubrum (strain ATCC 11170 / ATH 1.1.1 / DSM 467 / LMG 4362 / NCIMB 8255 / S1)).